Reading from the N-terminus, the 99-residue chain is MYGLINVGFGNVIIGDRVIAIVNPESAPLKRLKEVAKEEGKLIDATYGRKTRAIVITDSNHVILSAIQPETIASRFMQTFTDIEKLLEEIRQAERRTEE.

Belongs to the RemA family.

In Kosmotoga olearia (strain ATCC BAA-1733 / DSM 21960 / TBF 19.5.1), this protein is Putative regulatory protein Kole_1849.